Here is a 128-residue protein sequence, read N- to C-terminus: Cytochrome c-type biogenesis protein CcmE (128 aa).

Residues 1–8 (MQKRVRNR) lie on the Cytoplasmic side of the membrane. The chain crosses the membrane as a helical; Signal-anchor for type II membrane protein span at residues 9–29 (LITIIICFCSAFLGISIILYN). The Periplasmic portion of the chain corresponds to 30 to 128 (LEKNIVFFLP…KHDENYRPPQ (99 aa)). 2 residues coordinate heme: H120 and Y124.

This sequence belongs to the CcmE/CycJ family.

The protein resides in the cell inner membrane. Heme chaperone required for the biogenesis of c-type cytochromes. Transiently binds heme delivered by CcmC and transfers the heme to apo-cytochromes in a process facilitated by CcmF and CcmH. The protein is Cytochrome c-type biogenesis protein CcmE of Rickettsia rickettsii (strain Iowa).